The following is a 129-amino-acid chain: Small ribosomal subunit protein uS8 (129 aa).

It belongs to the universal ribosomal protein uS8 family. As to quaternary structure, part of the 30S ribosomal subunit.

One of the primary rRNA binding proteins, it binds directly to 16S rRNA central domain where it helps coordinate assembly of the platform of the 30S subunit. This Thermofilum pendens (strain DSM 2475 / Hrk 5) protein is Small ribosomal subunit protein uS8.